Reading from the N-terminus, the 84-residue chain is MVVIRLSRGGSKARPFYNIVAADKRVRRDGSFIERLGFYNPNARGGEEGLRVALDRVNYWKGVGAQASETAERLIKQATQKTAA.

The protein belongs to the bacterial ribosomal protein bS16 family.

The sequence is that of Small ribosomal subunit protein bS16 from Delftia acidovorans (strain DSM 14801 / SPH-1).